The chain runs to 456 residues: Enolase (456 aa).

Gln164 contacts (2R)-2-phosphoglycerate. Glu207 (proton donor) is an active-site residue. Mg(2+)-binding residues include Asp244, Glu287, and Asp314. (2R)-2-phosphoglycerate is bound by residues Lys339, Arg368, Ser369, and Lys390. Lys339 acts as the Proton acceptor in catalysis.

Belongs to the enolase family. As to quaternary structure, component of the RNA degradosome, a multiprotein complex involved in RNA processing and mRNA degradation. Requires Mg(2+) as cofactor.

Its subcellular location is the cytoplasm. The protein localises to the secreted. It localises to the cell surface. The enzyme catalyses (2R)-2-phosphoglycerate = phosphoenolpyruvate + H2O. The protein operates within carbohydrate degradation; glycolysis; pyruvate from D-glyceraldehyde 3-phosphate: step 4/5. Catalyzes the reversible conversion of 2-phosphoglycerate (2-PG) into phosphoenolpyruvate (PEP). It is essential for the degradation of carbohydrates via glycolysis. In Francisella tularensis subsp. holarctica (strain LVS), this protein is Enolase.